We begin with the raw amino-acid sequence, 189 residues long: Penicillin-binding protein activator LpoB (189 aa).

An N-terminal signal peptide occupies residues 1-16 (MRRILFVALSVMFLAG). The N-palmitoyl cysteine moiety is linked to residue C17. C17 carries S-diacylglycerol cysteine lipidation. The interval 18–52 (PSLPPEQPEPPTPVVPVTPSEKPTPPSEKVPEPPK) is disordered. The span at 19–45 (SLPPEQPEPPTPVVPVTPSEKPTPPSE) shows a compositional bias: pro residues.

Belongs to the LpoB family. As to quaternary structure, interacts with PBP1b.

Its subcellular location is the cell outer membrane. In terms of biological role, regulator of peptidoglycan synthesis that is essential for the function of penicillin-binding protein 1B (PBP1b). The sequence is that of Penicillin-binding protein activator LpoB from Photorhabdus laumondii subsp. laumondii (strain DSM 15139 / CIP 105565 / TT01) (Photorhabdus luminescens subsp. laumondii).